The chain runs to 304 residues: Large ribosomal subunit protein uL2m (304 aa).

Residues 1–60 (MALCALASALRSLSLASPAITARVPTLLPVGQSNVLLQLPSALALPAHRPVHMSADRSAK) constitute a mitochondrion transit peptide.

It belongs to the universal ribosomal protein uL2 family. Component of the mitochondrial ribosome large subunit (39S) which comprises a 16S rRNA and about 50 distinct proteins.

The protein localises to the mitochondrion. The protein is Large ribosomal subunit protein uL2m (Mrpl2) of Rattus norvegicus (Rat).